The sequence spans 20 residues: Brevinin-1LT (20 aa).

A disulfide bond links Cys-14 and Cys-20.

Expressed by the skin glands.

Its subcellular location is the secreted. Antimicrobial peptide. In Rana latastei (Italian agile frog), this protein is Brevinin-1LT.